The following is a 249-amino-acid chain: Flagellar L-ring protein (249 aa).

Residues Met-1–Gly-25 form the signal peptide. A lipid anchor (N-palmitoyl cysteine) is attached at Cys-26. Cys-26 carries S-diacylglycerol cysteine lipidation.

This sequence belongs to the FlgH family. The basal body constitutes a major portion of the flagellar organelle and consists of four rings (L,P,S, and M) mounted on a central rod.

The protein resides in the cell outer membrane. It is found in the bacterial flagellum basal body. Its function is as follows. Assembles around the rod to form the L-ring and probably protects the motor/basal body from shearing forces during rotation. The protein is Flagellar L-ring protein of Afipia carboxidovorans (strain ATCC 49405 / DSM 1227 / KCTC 32145 / OM5) (Oligotropha carboxidovorans).